Consider the following 197-residue polypeptide: Guanylate kinase (197 aa).

Residues 6-191 enclose the Guanylate kinase-like domain; it reads SKLIILSGPS…CVAQIEKIIS (186 aa). Position 13–20 (13–20) interacts with ATP; sequence GPSGVGKG.

The protein belongs to the guanylate kinase family.

The protein localises to the cytoplasm. The catalysed reaction is GMP + ATP = GDP + ADP. In terms of biological role, essential for recycling GMP and indirectly, cGMP. The protein is Guanylate kinase of Mesomycoplasma hyopneumoniae (strain 7448) (Mycoplasma hyopneumoniae).